The chain runs to 601 residues: Elongation factor 4 (601 aa).

The 183-residue stretch at 7 to 189 (RNIRNFSIIA…AIVHRIPPPK (183 aa)) folds into the tr-type G domain. Residues 19–24 (DHGKST) and 136–139 (NKID) contribute to the GTP site.

This sequence belongs to the TRAFAC class translation factor GTPase superfamily. Classic translation factor GTPase family. LepA subfamily.

It is found in the cell inner membrane. It carries out the reaction GTP + H2O = GDP + phosphate + H(+). Its function is as follows. Required for accurate and efficient protein synthesis under certain stress conditions. May act as a fidelity factor of the translation reaction, by catalyzing a one-codon backward translocation of tRNAs on improperly translocated ribosomes. Back-translocation proceeds from a post-translocation (POST) complex to a pre-translocation (PRE) complex, thus giving elongation factor G a second chance to translocate the tRNAs correctly. Binds to ribosomes in a GTP-dependent manner. The polypeptide is Elongation factor 4 (Xanthomonas campestris pv. campestris (strain 8004)).